Here is a 288-residue protein sequence, read N- to C-terminus: Peroxisomal membrane protein pex13 (288 aa).

Residues 1-32 (METNQNEKGPSLPSYPAGGIMSVSNSNADTNQ) form a disordered region. A compositionally biased stretch (polar residues) spans 22 to 32 (SVSNSNADTNQ). Residues 178-198 (IYSIVSSLAIILGLVGLPYAI) traverse the membrane as a helical segment. Positions 222–288 (DSLEFCKADY…PSNYCSIISR (67 aa)) constitute an SH3 domain.

It belongs to the peroxin-13 family. As to quaternary structure, interacts (via SH3 domain) with PEX14 (via SH3-binding motif); forming the PEX13-PEX14 docking complex.

The protein resides in the peroxisome membrane. Its function is as follows. Component of the PEX13-PEX14 docking complex, a translocon channel that specifically mediates the import of peroxisomal cargo proteins bound to PEX5 receptor. The PEX13-PEX14 docking complex forms a large import pore which can be opened to a diameter of about 9 nm. Mechanistically, PEX5 receptor along with cargo proteins associates with the PEX14 subunit of the PEX13-PEX14 docking complex in the cytosol, leading to the insertion of the receptor into the organelle membrane with the concomitant translocation of the cargo into the peroxisome matrix. The sequence is that of Peroxisomal membrane protein pex13 (pex13) from Schizosaccharomyces pombe (strain 972 / ATCC 24843) (Fission yeast).